We begin with the raw amino-acid sequence, 192 residues long: Casparian strip membrane protein 1 (192 aa).

Residues 1–26 (MTKSVRLEEGDASKVLVPVGSNKGVS) lie on the Cytoplasmic side of the membrane. Residues 27-47 (VMDLVLRLVGIAGTLGAAIAM) form a helical membrane-spanning segment. Topologically, residues 48–75 (GTNEQTLPFFTRFVVFNAEYDDFRSFRL) are extracellular. The helical transmembrane segment at 76–96 (FVIVNAIVCAYFVLTLPLSIV) threads the bilayer. Topologically, residues 97–107 (HIMRSAARGSR) are cytoplasmic. The chain crosses the membrane as a helical span at residues 108–128 (ILLIIMDTVMLALLTAGASAA). Over 129 to 161 (ASIVYLAHNGNTSTNWLPVCQQYGDFCQGASGS) the chain is Extracellular. N-linked (GlcNAc...) asparagine glycosylation occurs at asparagine 139. The helical transmembrane segment at 162–182 (LIGSFGAVVVFILIILLGAIA) threads the bilayer. Over 183–192 (LSRHAKRVVL) the chain is Cytoplasmic.

The protein belongs to the Casparian strip membrane proteins (CASP) family. Homodimer and heterodimers.

It is found in the cell membrane. Regulates membrane-cell wall junctions and localized cell wall deposition. Required for establishment of the Casparian strip membrane domain (CSD) and the subsequent formation of Casparian strips, a cell wall modification of the root endodermis that determines an apoplastic barrier between the intraorganismal apoplasm and the extraorganismal apoplasm and prevents lateral diffusion. The protein is Casparian strip membrane protein 1 of Lactuca saligna (Willowleaf lettuce).